The following is a 101-amino-acid chain: NAD(P)H-quinone oxidoreductase subunit 4L, chloroplastic (101 aa).

3 helical membrane-spanning segments follow: residues 2–22 (ILEHVLVLSAYLFFIGLYGLI), 32–52 (MCLELILNAVNMNFVTFSDFF), and 61–81 (IFCIFVIAIAAAEAAIGLAIV).

Belongs to the complex I subunit 4L family. NDH is composed of at least 16 different subunits, 5 of which are encoded in the nucleus.

The protein resides in the plastid. The protein localises to the chloroplast thylakoid membrane. The enzyme catalyses a plastoquinone + NADH + (n+1) H(+)(in) = a plastoquinol + NAD(+) + n H(+)(out). The catalysed reaction is a plastoquinone + NADPH + (n+1) H(+)(in) = a plastoquinol + NADP(+) + n H(+)(out). Functionally, NDH shuttles electrons from NAD(P)H:plastoquinone, via FMN and iron-sulfur (Fe-S) centers, to quinones in the photosynthetic chain and possibly in a chloroplast respiratory chain. The immediate electron acceptor for the enzyme in this species is believed to be plastoquinone. Couples the redox reaction to proton translocation, and thus conserves the redox energy in a proton gradient. The protein is NAD(P)H-quinone oxidoreductase subunit 4L, chloroplastic of Aethionema cordifolium (Lebanon stonecress).